The primary structure comprises 128 residues: Cytochrome c-type biogenesis protein CcmE (128 aa).

Residues M1–R8 are Cytoplasmic-facing. A helical; Signal-anchor for type II membrane protein transmembrane segment spans residues L9 to N29. The Extracellular segment spans residues L30–Q128. Heme is bound by residues H120 and Y124.

The protein belongs to the CcmE/CycJ family.

The protein localises to the cell membrane. Functionally, heme chaperone required for the biogenesis of c-type cytochromes. Transiently binds heme delivered by CcmC and transfers the heme to apo-cytochromes in a process facilitated by CcmF and CcmH. This is Cytochrome c-type biogenesis protein CcmE from Rickettsia africae (strain ESF-5).